The sequence spans 206 residues: Uridine kinase (206 aa).

9–16 (GGSGSGKT) is an ATP binding site.

This sequence belongs to the uridine kinase family.

Its subcellular location is the cytoplasm. The catalysed reaction is uridine + ATP = UMP + ADP + H(+). The enzyme catalyses cytidine + ATP = CMP + ADP + H(+). Its pathway is pyrimidine metabolism; CTP biosynthesis via salvage pathway; CTP from cytidine: step 1/3. The protein operates within pyrimidine metabolism; UMP biosynthesis via salvage pathway; UMP from uridine: step 1/1. This is Uridine kinase from Borrelia duttonii (strain Ly).